An 827-amino-acid polypeptide reads, in one-letter code: Glycerol-3-phosphate acyltransferase 1, mitochondrial (827 aa).

The Cytoplasmic portion of the chain corresponds to 1 to 87 (MEESSVTVGT…FFNPSIPSLG (87 aa)). Residues 80–120 (NPSIPSLGLRNVIYINETHTRHRGWLARRLSYILFVQERDV) form an important for mitochondrial localization region. Residues 88–118 (LRNVIYINETHTRHRGWLARRLSYILFVQER) lie within the membrane without spanning it. Topologically, residues 119 to 827 (DVHKGMFATS…LEYILSFVVL (709 aa)) are cytoplasmic. The HXXXXD motif motif lies at 230–235 (HRSHID). CoA-binding residues include Arg278, Arg279, Lys288, Arg293, and Arg328. Ser380 bears the Phosphoserine mark. Arg462 is a binding site for CoA. A phosphoserine mark is found at Ser687 and Ser694. Lys779 and Lys783 each carry N6-acetyllysine.

The protein belongs to the GPAT/DAPAT family. In terms of tissue distribution, highest levels in liver, intermediate levels in muscle and kidney, and lowest levels in lung and brain.

The protein resides in the mitochondrion outer membrane. The catalysed reaction is sn-glycerol 3-phosphate + an acyl-CoA = a 1-acyl-sn-glycero-3-phosphate + CoA. It carries out the reaction (9Z,12Z)-octadecadienoyl-CoA + sn-glycerol 3-phosphate = 1-(9Z,12Z)-octadecadienoyl-sn-glycero-3-phosphate + CoA. It catalyses the reaction sn-glycerol 3-phosphate + (9Z)-octadecenoyl-CoA = 1-(9Z-octadecenoyl)-sn-glycero-3-phosphate + CoA. The enzyme catalyses sn-glycerol 3-phosphate + octadecanoyl-CoA = 1-octadecanoyl-sn-glycero-3-phosphate + CoA. The catalysed reaction is sn-glycerol 3-phosphate + hexadecanoyl-CoA = 1-hexadecanoyl-sn-glycero-3-phosphate + CoA. It carries out the reaction dodecanoyl-CoA + sn-glycerol 3-phosphate = 1-dodecanoyl-sn-glycerol 3-phosphate + CoA. It catalyses the reaction 1-acyl-sn-glycero-3-phospho-(1'-sn-glycerol) + an acyl-CoA = a 1,2-diacyl-sn-glycero-3-phospho-(1'-sn-glycerol) + CoA. It participates in phospholipid metabolism; CDP-diacylglycerol biosynthesis; CDP-diacylglycerol from sn-glycerol 3-phosphate: step 1/3. Functionally, mitochondrial membrane protein that catalyzes the essential first step of biosynthesis of glycerolipids such as triglycerides, phosphatidic acids and lysophosphatidic acids. Esterifies acyl-group from acyl-coenzyme A (acyl-CoA) to the sn-1 position of glycerol-3-phosphate, to produce lysophosphatidic acid. Has a narrow hydrophobic binding cleft that selects for a linear acyl chain. Catalytic activity is higher for substrates with a 16-carbon acyl chain. In Mus musculus (Mouse), this protein is Glycerol-3-phosphate acyltransferase 1, mitochondrial.